The primary structure comprises 78 residues: Metallothionein-like protein type 2 (78 aa).

Belongs to the metallothionein superfamily. Type 15 family.

Functionally, metallothioneins have a high content of cysteine residues that bind various heavy metals. The sequence is that of Metallothionein-like protein type 2 from Nicotiana glutinosa (Tobacco).